The primary structure comprises 234 residues: Peptidyl-prolyl cis-trans isomerase FKBP17-3, chloroplastic (234 aa).

Residues 1 to 28 constitute a chloroplast transit peptide; sequence MATLFTATVPSHHRFVSPSQHPKQSLLS. The PPIase FKBP-type domain occupies 130-228; that stretch reads GYLVVFDVKG…DYIIEVDTVY (99 aa).

It belongs to the FKBP-type PPIase family.

The protein localises to the plastid. It is found in the chloroplast thylakoid lumen. The catalysed reaction is [protein]-peptidylproline (omega=180) = [protein]-peptidylproline (omega=0). Its function is as follows. PPIases accelerate the folding of proteins. It catalyzes the cis-trans isomerization of proline imidic peptide bonds in oligopeptides. This chain is Peptidyl-prolyl cis-trans isomerase FKBP17-3, chloroplastic (FKBP17-3), found in Arabidopsis thaliana (Mouse-ear cress).